The primary structure comprises 157 residues: MVKRILGLDPGLATLGFGSITVQPDESLQVLDFGVIKTAAGEEIGSRLLTIYEDLHTLLQHFQPDLVAIEKFFFYRMSNTILVAQARGVILLVLAQHHLALMEFTPAQVKQTLTGHGNADKQEVQLAVQRELKLESLPRPDDAADALALALTASFQR.

Active-site residues include aspartate 9, glutamate 70, and aspartate 142. Mg(2+) is bound by residues aspartate 9, glutamate 70, and aspartate 142.

It belongs to the RuvC family. Homodimer which binds Holliday junction (HJ) DNA. The HJ becomes 2-fold symmetrical on binding to RuvC with unstacked arms; it has a different conformation from HJ DNA in complex with RuvA. In the full resolvosome a probable DNA-RuvA(4)-RuvB(12)-RuvC(2) complex forms which resolves the HJ. The cofactor is Mg(2+).

The protein resides in the cytoplasm. The enzyme catalyses Endonucleolytic cleavage at a junction such as a reciprocal single-stranded crossover between two homologous DNA duplexes (Holliday junction).. Its function is as follows. The RuvA-RuvB-RuvC complex processes Holliday junction (HJ) DNA during genetic recombination and DNA repair. Endonuclease that resolves HJ intermediates. Cleaves cruciform DNA by making single-stranded nicks across the HJ at symmetrical positions within the homologous arms, yielding a 5'-phosphate and a 3'-hydroxyl group; requires a central core of homology in the junction. The consensus cleavage sequence is 5'-(A/T)TT(C/G)-3'. Cleavage occurs on the 3'-side of the TT dinucleotide at the point of strand exchange. HJ branch migration catalyzed by RuvA-RuvB allows RuvC to scan DNA until it finds its consensus sequence, where it cleaves and resolves the cruciform DNA. In Cyanothece sp. (strain PCC 7425 / ATCC 29141), this protein is Crossover junction endodeoxyribonuclease RuvC.